The chain runs to 189 residues: Putative manganese efflux pump MntP (189 aa).

Helical transmembrane passes span 3–23, 41–61, 65–85, 106–128, 141–161, and 168–188; these read PVSL…AAIG, IIFG…GQAA, VADW…LHMI, WILA…GLAF, GLAT…LGAV, and MVGG…HLSA.

The protein belongs to the MntP (TC 9.B.29) family.

It is found in the cell inner membrane. Its function is as follows. Probably functions as a manganese efflux pump. The polypeptide is Putative manganese efflux pump MntP (Pseudomonas aeruginosa (strain UCBPP-PA14)).